Here is a 648-residue protein sequence, read N- to C-terminus: Serine/threonine-protein phosphatase 1 regulatory subunit PIG1 (648 aa).

A compositionally biased stretch (low complexity) spans 20–51 (STSSFVSSTTSNSFSPLEDSTSASSSTSSSSS). The tract at residues 20–52 (STSSFVSSTTSNSFSPLEDSTSASSSTSSSSSG) is disordered. A CBM21 domain is found at 201-331 (HSLELSDPVS…NNDYKNYEIT (131 aa)). The segment covering 593-609 (RESSSPEISPLNTTTSL) has biased composition (polar residues). Residues 593–629 (RESSSPEISPLNTTTSLPFFPGDNMSDSSGEYEERTS) form a disordered region.

Functionally, regulates the activity of glycogen synthase. It is most probably a regulatory subunit for protein phosphatase type 1. The sequence is that of Serine/threonine-protein phosphatase 1 regulatory subunit PIG1 (PIG1) from Saccharomyces cerevisiae (strain ATCC 204508 / S288c) (Baker's yeast).